Consider the following 208-residue polypeptide: Translation initiation factor 2 subunit beta (208 aa).

The region spanning 145 to 203 (VIEEGETYELRIESVGSKGDGIAKVDKYLIFVPNTSKGEIVKAKVKKISGTLAFAEIVE) is the TRAM domain.

It belongs to the eIF-2-beta/eIF-5 family. In terms of assembly, heterotrimer composed of an alpha, a beta and a gamma chain.

EIF-2 functions in the early steps of protein synthesis by forming a ternary complex with GTP and initiator tRNA. The chain is Translation initiation factor 2 subunit beta from Methanothrix thermoacetophila (strain DSM 6194 / JCM 14653 / NBRC 101360 / PT) (Methanosaeta thermophila).